The chain runs to 282 residues: ATP synthase gamma chain (282 aa).

It belongs to the ATPase gamma chain family. In terms of assembly, F-type ATPases have 2 components, CF(1) - the catalytic core - and CF(0) - the membrane proton channel. CF(1) has five subunits: alpha(3), beta(3), gamma(1), delta(1), epsilon(1). CF(0) has three main subunits: a, b and c.

The protein localises to the cell inner membrane. Its function is as follows. Produces ATP from ADP in the presence of a proton gradient across the membrane. The gamma chain is believed to be important in regulating ATPase activity and the flow of protons through the CF(0) complex. This is ATP synthase gamma chain from Fusobacterium nucleatum subsp. nucleatum (strain ATCC 25586 / DSM 15643 / BCRC 10681 / CIP 101130 / JCM 8532 / KCTC 2640 / LMG 13131 / VPI 4355).